A 111-amino-acid polypeptide reads, in one-letter code: Cytochrome c oxidase subunit 7A2-like, mitochondrial (111 aa).

Residues 1-54 constitute a mitochondrion transit peptide; that stretch reads MYYKFSSFTQKLAGAWASEAYTPQGLKPVSTEAPPIIFATPTKLTSSVTAYDYS. Lys-68 is modified (N6-acetyllysine). Residues 79 to 104 traverse the membrane as a helical segment; it reads PDQMLYRTTMALTLGGTIYCLIALYM.

The protein belongs to the cytochrome c oxidase VIIa family.

It localises to the mitochondrion inner membrane. In terms of biological role, non-functional protein. In contrast to the protein found in other strains (AC Q99KD6), cannot induce the assembly of mitochondrial respiratory supercomplexes. This Mus musculus (Mouse) protein is Cytochrome c oxidase subunit 7A2-like, mitochondrial.